Here is a 485-residue protein sequence, read N- to C-terminus: Katanin p60 ATPase-containing subunit A1 (485 aa).

Residues 101–173 (HRSSPCVVRK…KNKAEAVETE (73 aa)) are disordered. The segment covering 141 to 173 (NGDKGKPQKSKEKKENPSKPKEDKNKAEAVETE) has biased composition (basic and acidic residues). An ATP-binding site is contributed by 244–251 (GPPGTGKT).

The protein belongs to the AAA ATPase family. Katanin p60 subunit A1 subfamily. As to quaternary structure, can homooligomerize into hexameric rings, which may be promoted by interaction with microtubules. Interacts with katnb1, which may serve as a targeting subunit.

It localises to the cytoplasm. It is found in the cytoskeleton. The protein localises to the microtubule organizing center. The protein resides in the centrosome. Its subcellular location is the spindle pole. It localises to the spindle. It catalyses the reaction n ATP + n H2O + a microtubule = n ADP + n phosphate + (n+1) alpha/beta tubulin heterodimers.. Its activity is regulated as follows. ATPase activity is stimulated by microtubules, which promote homooligomerization. ATP-dependent microtubule severing is stimulated by interaction with katnb1. Functionally, catalytic subunit of a complex which severs microtubules in an ATP-dependent manner. Microtubule severing may promote rapid reorganization of cellular microtubule arrays and the release of microtubules from the centrosome following nucleation. The protein is Katanin p60 ATPase-containing subunit A1 (katna1) of Danio rerio (Zebrafish).